We begin with the raw amino-acid sequence, 156 residues long: Large ribosomal subunit protein uL23 (156 aa).

Positions 1–19 (MAPKAKKEAPAPPKVEAKA) are enriched in basic and acidic residues. The tract at residues 1–67 (MAPKAKKEAP…PKYPRKSAPR (67 aa)) is disordered. Ala2 bears the N,N,N-trimethylalanine mark. Lys14 participates in a covalent cross-link: Glycyl lysine isopeptide (Lys-Gly) (interchain with G-Cter in SUMO2). Residues 20-67 (KALKAKKAVLKGVHSHKKKKIRTSPTFRRPKTLRLRRQPKYPRKSAPR) show a composition bias toward basic residues. Residues 32–74 (VHSHKKKKIRTSPTFRRPKTLRLRRQPKYPRKSAPRRNKLDHY) form a beta-like import receptor binding (BIB) domain region. Position 41 is a citrulline (Arg41). Residue Ser43 is modified to Phosphoserine. Thr45 bears the Phosphothreonine mark. Lys70 carries the N6-acetyllysine modification.

Belongs to the universal ribosomal protein uL23 family. As to quaternary structure, component of the large ribosomal subunit. Interacts with LYAR and GNL2. Interacts with MDM2; this interaction may promote MDM2-mediated p53/TP53 polyubiquitination. Directly interacts (via BIB domain) with IPO5, IPO7, KPNB1 and TNPO1; these interactions are involved in RPL23A nuclear import for the assembly of ribosomal subunits. Interacts with IPO8. In terms of processing, N-terminus is methylated by METTL11A/NTM1. Citrullinated by PADI4.

It is found in the cytoplasm. Its subcellular location is the nucleus. In terms of biological role, component of the large ribosomal subunit. The ribosome is a large ribonucleoprotein complex responsible for the synthesis of proteins in the cell. Binds a specific region on the 26S rRNA. May promote p53/TP53 degradation possibly through the stimulation of MDM2-mediated TP53 polyubiquitination. The sequence is that of Large ribosomal subunit protein uL23 (RPL23A) from Oryctolagus cuniculus (Rabbit).